We begin with the raw amino-acid sequence, 362 residues long: Beta-ketoacyl-[acyl-carrier-protein] synthase III 2 (362 aa).

Active-site residues include C113 and H251. The tract at residues 252–256 (QANIR) is ACP-binding. Residue N281 is part of the active site.

Belongs to the thiolase-like superfamily. FabH family. Homodimer.

Its subcellular location is the cytoplasm. The enzyme catalyses malonyl-[ACP] + acetyl-CoA + H(+) = 3-oxobutanoyl-[ACP] + CO2 + CoA. It participates in lipid metabolism; fatty acid biosynthesis. In terms of biological role, catalyzes the condensation reaction of fatty acid synthesis by the addition to an acyl acceptor of two carbons from malonyl-ACP. Catalyzes the first condensation reaction which initiates fatty acid synthesis and may therefore play a role in governing the total rate of fatty acid production. Possesses both acetoacetyl-ACP synthase and acetyl transacylase activities. Its substrate specificity determines the biosynthesis of branched-chain and/or straight-chain of fatty acids. This Vibrio cholerae serotype O1 (strain ATCC 39315 / El Tor Inaba N16961) protein is Beta-ketoacyl-[acyl-carrier-protein] synthase III 2.